Here is a 725-residue protein sequence, read N- to C-terminus: Catalase-peroxidase (725 aa).

Composition is skewed to polar residues over residues 1–12 and 23–32; these read MSTSNDPSNNAS and PKQSAGSGTA. Positions 1-20 are cleaved as a signal peptide; that stretch reads MSTSNDPSNNASAGKCPFHA. A disordered region spans residues 1 to 35; sequence MSTSNDPSNNASAGKCPFHAETPKQSAGSGTANRD. The segment at residues 105-226 is a cross-link (tryptophyl-tyrosyl-methioninium (Trp-Tyr) (with M-252)); the sequence is WHGAGTYRTV…IGATEMGLIY (122 aa). Catalysis depends on H106, which acts as the Proton acceptor. Positions 226 to 252 form a cross-link, tryptophyl-tyrosyl-methioninium (Tyr-Met) (with W-105); sequence YVNPEGPNASGEPLSAAAAIRATFGNM. Heme b is bound at residue H267.

It belongs to the peroxidase family. Peroxidase/catalase subfamily. As to quaternary structure, homodimer or homotetramer. Requires heme b as cofactor. In terms of processing, formation of the three residue Trp-Tyr-Met cross-link is important for the catalase, but not the peroxidase activity of the enzyme.

It carries out the reaction H2O2 + AH2 = A + 2 H2O. It catalyses the reaction 2 H2O2 = O2 + 2 H2O. Functionally, bifunctional enzyme with both catalase and broad-spectrum peroxidase activity. This chain is Catalase-peroxidase, found in Klebsiella pneumoniae subsp. pneumoniae (strain ATCC 700721 / MGH 78578).